The following is a 62-amino-acid chain: UPF0434 protein FTL_1400 (62 aa).

It belongs to the UPF0434 family.

The polypeptide is UPF0434 protein FTL_1400 (Francisella tularensis subsp. holarctica (strain LVS)).